Consider the following 779-residue polypeptide: Probable phosphoketolase 2 (779 aa).

This sequence belongs to the XFP family. Thiamine diphosphate is required as a cofactor.

This is Probable phosphoketolase 2 from Rhizobium meliloti (strain 1021) (Ensifer meliloti).